The following is a 269-amino-acid chain: 15-hydroxyprostaglandin dehydrogenase [NAD(+)] (269 aa).

NAD(+)-binding positions include 12 to 20 (GAAQGIGKA), 36 to 37 (DW), 63 to 65 (CDV), and Asn91. The substrate site is built by Ser138 and Gln148. Tyr151 serves as the catalytic Proton acceptor. NAD(+) contacts are provided by residues 151–155 (YCASK) and 186–188 (VDT).

This sequence belongs to the short-chain dehydrogenases/reductases (SDR) family. As to quaternary structure, homodimer. Expressed in proximal convoluted tubules of the kidney, where it colocalizes with the prostaglandin transporter SLC22A22 (at protein level). Expressed in lung, intestine, stomach and liver.

It localises to the cytoplasm. It carries out the reaction prostaglandin E2 + NAD(+) = 15-oxoprostaglandin E2 + NADH + H(+). It catalyses the reaction (15S)-hydroxy-(5Z,8Z,11Z,13E)-eicosatetraenoate + NAD(+) = 15-oxo-(5Z,8Z,11Z,13E)-eicosatetraenoate + NADH + H(+). The catalysed reaction is (11R)-hydroxy-(5Z,8Z,12E,14Z)-eicosatetraenoate + NAD(+) = 11-oxo-(5Z,8Z,12E,14Z)-eicosatetraenoate + NADH + H(+). The enzyme catalyses lipoxin A4 + NAD(+) = 15-oxo-(5S,6R)-dihydroxy-(7E,9E,11Z,13E)-eicosatetraenoate + NADH + H(+). It carries out the reaction 15-oxo-(5S,6R)-dihydroxy-(7E,9E,11Z)-eicosatrienoate + NADH + H(+) = (5S,6R,15S)-trihydroxy-(7E,9E,11Z)-eicosatrienoate + NAD(+). It catalyses the reaction prostaglandin A1 + NAD(+) = 15-oxo-prostaglandin A1 + NADH + H(+). The catalysed reaction is prostaglandin E1 + NAD(+) = 15-oxoprostaglandin E1 + NADH + H(+). The enzyme catalyses 14-hydroxy-(4Z,7Z,10Z,12E,16Z,19Z)-docosahexaenoate + NAD(+) = 14-oxo-(4Z,7Z,10Z,12E,16Z,19Z)-docosahexaenoate + NADH + H(+). It carries out the reaction resolvin E1 + NAD(+) = 18-oxo-resolvin E1 + NADH + H(+). It catalyses the reaction resolvin D1 + NAD(+) = 8-oxoresolvin D1 + NADH + H(+). The catalysed reaction is resolvin D1 + NAD(+) = 17-oxoresolvin D1 + NADH + H(+). The enzyme catalyses resolvin D2 + NAD(+) = 7-oxoresolvin D2 + NADH + H(+). It carries out the reaction resolvin D2 + NAD(+) = 16-oxoresolvin D2 + NADH + H(+). Catalyzes the NAD-dependent dehydrogenation (oxidation) of a broad array of hydroxylated polyunsaturated fatty acids (mainly eicosanoids and docosanoids, including prostaglandins, lipoxins and resolvins), yielding their corresponding keto (oxo) metabolites. Decreases the levels of the pro-proliferative prostaglandins such as prostaglandin E2 (whose activity is increased in cancer because of an increase in the expression of cyclooxygenase 2) and generates oxo-fatty acid products that can profoundly influence cell function by abrogating pro-inflammatory cytokine expression. Converts resolvins E1, D1 and D2 to their oxo products, which represents a mode of resolvin inactivation. Resolvin E1 plays important roles during the resolution phase of acute inflammation, while resolvins D1 and D2 have a unique role in obesity-induced adipose inflammation. The sequence is that of 15-hydroxyprostaglandin dehydrogenase [NAD(+)] (Hpgd) from Mus musculus (Mouse).